Consider the following 375-residue polypeptide: Probable UDP-N-acetylglucosamine 2-epimerase (375 aa).

This sequence belongs to the UDP-N-acetylglucosamine 2-epimerase family.

It is found in the cytoplasm. The enzyme catalyses UDP-N-acetyl-alpha-D-glucosamine = UDP-N-acetyl-alpha-D-mannosamine. It functions in the pathway glycan metabolism; exopolysaccharide EPS I biosynthesis. In terms of biological role, may be involved in synthesis of N-acetyltrideoxygalactose, a component of exopolysaccharide EPS I which functions as a virulence factor. This is Probable UDP-N-acetylglucosamine 2-epimerase (epsC) from Ralstonia solanacearum (Pseudomonas solanacearum).